The chain runs to 398 residues: Serpin-Z2A (398 aa).

The RCL stretch occupies residues 343-367 (GTEAAAATIAKAVLLSASPPSDMDF).

This sequence belongs to the serpin family.

In terms of biological role, inhibits chymotrypsin and cathepsin G in vitro. This Triticum aestivum (Wheat) protein is Serpin-Z2A.